The following is a 171-amino-acid chain: S-ribosylhomocysteine lyase (171 aa).

Fe cation is bound by residues His54, His58, and Cys128.

This sequence belongs to the LuxS family. In terms of assembly, homodimer. Fe cation is required as a cofactor.

The enzyme catalyses S-(5-deoxy-D-ribos-5-yl)-L-homocysteine = (S)-4,5-dihydroxypentane-2,3-dione + L-homocysteine. Its function is as follows. Involved in the synthesis of autoinducer 2 (AI-2) which is secreted by bacteria and is used to communicate both the cell density and the metabolic potential of the environment. The regulation of gene expression in response to changes in cell density is called quorum sensing. Catalyzes the transformation of S-ribosylhomocysteine (RHC) to homocysteine (HC) and 4,5-dihydroxy-2,3-pentadione (DPD). The sequence is that of S-ribosylhomocysteine lyase from Citrobacter koseri (strain ATCC BAA-895 / CDC 4225-83 / SGSC4696).